A 448-amino-acid chain; its full sequence is MKHRYLPMTEQDQKEMLDVIGVSSVDELFEDIPEKVRFKGLYDIKAAKSESALLKELTALAAKNKDTNANVSFLGAGVYNHYKPVIVDHVISRSEFYTAYTPYQPEISQGELQAIFEFQTMIAELTGMDLANSSMYDGGTALAEAGMLAAGHTRRKKILVSETVHPEYRDVVATYAYGQSIEIVTIPHKDGVTDIAALKELIDDNTAAVIAQYPNFFGQVEDIQVIGDIAHEAKSLFVVSSNPLALGILTPPGKLGADICVGDAQVFGISEAFGGPHCGFFAVTTKLMRKVPGRLVGETVDGEGRRGYVLTLQAREQHIRRDKATSNICSNQALLALAASVAMTALGKQGIREMATQNIAKTRYAKNAFEAAGFTVAFQGAHFNEIVVKTNKCVKEINKGLIEKGIIGGYPLGQNYDSLKHHVLIAVTELRTKEEIDALVAEMGALHA.

This sequence belongs to the GcvP family. N-terminal subunit subfamily. As to quaternary structure, the glycine cleavage system is composed of four proteins: P, T, L and H. In this organism, the P 'protein' is a heterodimer of two subunits.

The catalysed reaction is N(6)-[(R)-lipoyl]-L-lysyl-[glycine-cleavage complex H protein] + glycine + H(+) = N(6)-[(R)-S(8)-aminomethyldihydrolipoyl]-L-lysyl-[glycine-cleavage complex H protein] + CO2. In terms of biological role, the glycine cleavage system catalyzes the degradation of glycine. The P protein binds the alpha-amino group of glycine through its pyridoxal phosphate cofactor; CO(2) is released and the remaining methylamine moiety is then transferred to the lipoamide cofactor of the H protein. The chain is Probable glycine dehydrogenase (decarboxylating) subunit 1 from Lysinibacillus sphaericus (strain C3-41).